A 235-amino-acid polypeptide reads, in one-letter code: Thiopurine S-methyltransferase (235 aa).

4 residues coordinate S-adenosyl-L-methionine: tryptophan 13, leucine 48, glutamate 69, and arginine 126. Residues 199 to 235 form a disordered region; it reads PDPQNGAPRRVEHKVYQLTGKRPASPEADGRAAETED. Positions 226–235 are enriched in basic and acidic residues; it reads ADGRAAETED.

It belongs to the class I-like SAM-binding methyltransferase superfamily. TPMT family.

It is found in the cytoplasm. It carries out the reaction S-adenosyl-L-methionine + a thiopurine = S-adenosyl-L-homocysteine + a thiopurine S-methylether.. The polypeptide is Thiopurine S-methyltransferase (Stutzerimonas stutzeri (strain A1501) (Pseudomonas stutzeri)).